A 439-amino-acid polypeptide reads, in one-letter code: GTPase Der (439 aa).

2 EngA-type G domains span residues 2–168 (ATVL…EEKG) and 181–357 (IKIA…SSYT). GTP-binding positions include 8-15 (GKPNVGKS), 55-59 (DTCGV), 118-121 (NKTE), 187-194 (GRPNVGKS), 234-238 (DTAGL), and 300-303 (NKWD). The KH-like domain occupies 358–439 (TKVPSSALNS…PIFLKFKKSR (82 aa)).

It belongs to the TRAFAC class TrmE-Era-EngA-EngB-Septin-like GTPase superfamily. EngA (Der) GTPase family. Associates with the 50S ribosomal subunit.

GTPase that plays an essential role in the late steps of ribosome biogenesis. This is GTPase Der from Thermotoga neapolitana (strain ATCC 49049 / DSM 4359 / NBRC 107923 / NS-E).